The chain runs to 201 residues: Small ribosomal subunit protein uS4 (201 aa).

One can recognise an S4 RNA-binding domain in the interval 91 to 155 (TRLDNVVYRA…STLPFQVARE (65 aa)).

It belongs to the universal ribosomal protein uS4 family. Part of the 30S ribosomal subunit. Contacts protein S5. The interaction surface between S4 and S5 is involved in control of translational fidelity.

In terms of biological role, one of the primary rRNA binding proteins, it binds directly to 16S rRNA where it nucleates assembly of the body of the 30S subunit. Functionally, with S5 and S12 plays an important role in translational accuracy. The protein is Small ribosomal subunit protein uS4 of Nocardia farcinica (strain IFM 10152).